Reading from the N-terminus, the 249-residue chain is General transcription factor IIF subunit 2 (249 aa).

At Ala2 the chain carries N-acetylalanine. Lys22, Lys33, and Lys137 each carry N6-acetyllysine. Position 142 is a phosphoserine (Ser142). 2 residues coordinate DNA: Gly227 and His229. Ser248 bears the Phosphoserine mark.

Belongs to the TFIIF beta subunit family. In terms of assembly, heterodimer of an alpha and a beta subunit. Interacts with HTATSF1 and GPBP1. Interacts with URI1. Interacts with GTF2B (via N-terminus); this interaction is inhibited in presence of GTF2F1. Part of TBP-based Pol II pre-initiation complex (PIC), in which Pol II core assembles with general transcription factors and other specific initiation factors including GTF2E1, GTF2E2, GTF2F1, GTF2F2, TCEA1, ERCC2, ERCC3, GTF2H2, GTF2H3, GTF2H4, GTF2H5, GTF2A1, GTF2A2, GTF2B and TBP; this large multi-subunit PIC complex mediates DNA unwinding and targets Pol II core to the transcription start site where the first phosphodiester bond forms.

The protein resides in the nucleus. In terms of biological role, TFIIF is a general transcription initiation factor that binds to RNA polymerase II and helps to recruit it to the initiation complex in collaboration with TFIIB. The sequence is that of General transcription factor IIF subunit 2 (GTF2F2) from Homo sapiens (Human).